We begin with the raw amino-acid sequence, 310 residues long: ADP-L-glycero-D-manno-heptose-6-epimerase (310 aa).

NADP(+) contacts are provided by residues 10–11 (FI), 31–32 (DN), Lys38, Lys53, 75–79 (EGACS), and Asn92. Residue Tyr140 is the Proton acceptor of the active site. Lys144 provides a ligand contact to NADP(+). Asn169 serves as a coordination point for substrate. Val170 and Lys178 together coordinate NADP(+). The active-site Proton acceptor is the Lys178. Residues Ser180, His187, 201 to 204 (FEGS), Arg209, and Tyr272 each bind substrate.

The protein belongs to the NAD(P)-dependent epimerase/dehydratase family. HldD subfamily. In terms of assembly, homopentamer. The cofactor is NADP(+).

The catalysed reaction is ADP-D-glycero-beta-D-manno-heptose = ADP-L-glycero-beta-D-manno-heptose. It participates in nucleotide-sugar biosynthesis; ADP-L-glycero-beta-D-manno-heptose biosynthesis; ADP-L-glycero-beta-D-manno-heptose from D-glycero-beta-D-manno-heptose 7-phosphate: step 4/4. Catalyzes the interconversion between ADP-D-glycero-beta-D-manno-heptose and ADP-L-glycero-beta-D-manno-heptose via an epimerization at carbon 6 of the heptose. The protein is ADP-L-glycero-D-manno-heptose-6-epimerase of Salmonella heidelberg (strain SL476).